The following is a 179-amino-acid chain: ATP synthase subunit delta (179 aa).

Belongs to the ATPase delta chain family. In terms of assembly, F-type ATPases have 2 components, F(1) - the catalytic core - and F(0) - the membrane proton channel. F(1) has five subunits: alpha(3), beta(3), gamma(1), delta(1), epsilon(1). F(0) has three main subunits: a(1), b(2) and c(10-14). The alpha and beta chains form an alternating ring which encloses part of the gamma chain. F(1) is attached to F(0) by a central stalk formed by the gamma and epsilon chains, while a peripheral stalk is formed by the delta and b chains.

Its subcellular location is the cell inner membrane. Its function is as follows. F(1)F(0) ATP synthase produces ATP from ADP in the presence of a proton or sodium gradient. F-type ATPases consist of two structural domains, F(1) containing the extramembraneous catalytic core and F(0) containing the membrane proton channel, linked together by a central stalk and a peripheral stalk. During catalysis, ATP synthesis in the catalytic domain of F(1) is coupled via a rotary mechanism of the central stalk subunits to proton translocation. In terms of biological role, this protein is part of the stalk that links CF(0) to CF(1). It either transmits conformational changes from CF(0) to CF(1) or is implicated in proton conduction. This is ATP synthase subunit delta from Thermosipho melanesiensis (strain DSM 12029 / CIP 104789 / BI429).